Reading from the N-terminus, the 275-residue chain is Dermonecrotic toxin SpeSicTox-betaIIA2iii (275 aa).

The active site involves histidine 5. Positions 25 and 27 each coordinate Mg(2+). The active-site Nucleophile is histidine 41. 2 cysteine pairs are disulfide-bonded: cysteine 45-cysteine 51 and cysteine 47-cysteine 190. Aspartate 85 contributes to the Mg(2+) binding site.

Belongs to the arthropod phospholipase D family. Class II subfamily. Mg(2+) serves as cofactor. In terms of tissue distribution, expressed by the venom gland.

The protein localises to the secreted. The enzyme catalyses an N-(acyl)-sphingosylphosphocholine = an N-(acyl)-sphingosyl-1,3-cyclic phosphate + choline. It catalyses the reaction an N-(acyl)-sphingosylphosphoethanolamine = an N-(acyl)-sphingosyl-1,3-cyclic phosphate + ethanolamine. It carries out the reaction a 1-acyl-sn-glycero-3-phosphocholine = a 1-acyl-sn-glycero-2,3-cyclic phosphate + choline. The catalysed reaction is a 1-acyl-sn-glycero-3-phosphoethanolamine = a 1-acyl-sn-glycero-2,3-cyclic phosphate + ethanolamine. Functionally, dermonecrotic toxins cleave the phosphodiester linkage between the phosphate and headgroup of certain phospholipids (sphingolipid and lysolipid substrates), forming an alcohol (often choline) and a cyclic phosphate. This toxin acts on sphingomyelin (SM). It may also act on ceramide phosphoethanolamine (CPE), lysophosphatidylcholine (LPC) and lysophosphatidylethanolamine (LPE), but not on lysophosphatidylserine (LPS), and lysophosphatidylglycerol (LPG). It acts by transphosphatidylation, releasing exclusively cyclic phosphate products as second products. Induces dermonecrosis, hemolysis, increased vascular permeability, edema, inflammatory response, and platelet aggregation. The protein is Dermonecrotic toxin SpeSicTox-betaIIA2iii of Sicarius peruensis (Six-eyed sand spider).